The following is a 427-amino-acid chain: Actin-related protein 3 (427 aa).

The protein belongs to the actin family. ARP3 subfamily. Component of the Arp2/3 complex composed of arp2, act2, arc1/p41-ARC, arc2/p34-ARC, arc3/p21-ARC, arc4/p20-ARC and arc5/p16-ARC.

It is found in the cytoplasm. Its subcellular location is the cytoskeleton. It localises to the actin patch. In terms of biological role, functions as ATP-binding component of the Arp2/3 complex which is involved in regulation of actin polymerization and together with an activating nucleation-promoting factor (NPF) mediates the formation of branched actin networks. Seems to contact the pointed end of the daughter actin filament. May be involved in cytokinesis. The sequence is that of Actin-related protein 3 (act2) from Schizosaccharomyces pombe (strain 972 / ATCC 24843) (Fission yeast).